The sequence spans 570 residues: Urease subunit alpha 1 (570 aa).

The Urease domain occupies glycine 131–phenylalanine 570. Ni(2+) is bound by residues histidine 136, histidine 138, and lysine 219. N6-carboxylysine is present on lysine 219. Residue histidine 221 participates in substrate binding. The Ni(2+) site is built by histidine 248 and histidine 274. Histidine 322 (proton donor) is an active-site residue. Aspartate 362 provides a ligand contact to Ni(2+).

Belongs to the metallo-dependent hydrolases superfamily. Urease alpha subunit family. As to quaternary structure, heterotrimer of UreA (gamma), UreB (beta) and UreC (alpha) subunits. Three heterotrimers associate to form the active enzyme. Ni cation serves as cofactor. Post-translationally, carboxylation allows a single lysine to coordinate two nickel ions.

Its subcellular location is the cytoplasm. It carries out the reaction urea + 2 H2O + H(+) = hydrogencarbonate + 2 NH4(+). Its pathway is nitrogen metabolism; urea degradation; CO(2) and NH(3) from urea (urease route): step 1/1. In Brucella melitensis biotype 1 (strain ATCC 23456 / CCUG 17765 / NCTC 10094 / 16M), this protein is Urease subunit alpha 1.